The primary structure comprises 371 residues: F-box protein At2g41170 (371 aa).

The F-box domain maps to 56–102 (KMSLLDLPDLTLDCILEKLSPSELCAMTSVCSELRDKCVSDHLWEKH).

The protein is F-box protein At2g41170 of Arabidopsis thaliana (Mouse-ear cress).